We begin with the raw amino-acid sequence, 768 residues long: UPF0313 protein VV2143 (768 aa).

The 278-residue stretch at 363–640 (AYDMIKTSVN…LHKALLRYHD (278 aa)) folds into the Radical SAM core domain. 3 residues coordinate [4Fe-4S] cluster: Cys377, Cys381, and Cys384. The segment at 674 to 768 (DARTPAQRRK…GGRNQPSRAR (95 aa)) is disordered. Residues 679-689 (AQRRKSGRHGA) show a composition bias toward basic residues. Residues 719–731 (GGQSNSAPSRSGS) are compositionally biased toward polar residues.

It belongs to the UPF0313 family. Requires [4Fe-4S] cluster as cofactor.

This Vibrio vulnificus (strain YJ016) protein is UPF0313 protein VV2143.